Consider the following 279-residue polypeptide: Acyl-coenzyme A thioesterase MBLAC2 (279 aa).

S2 is modified (N-acetylserine). Zn(2+) contacts are provided by H83, H85, D87, H88, H170, D189, and H231. C254 is lipidated: S-palmitoyl cysteine.

It belongs to the metallo-beta-lactamase superfamily. Glyoxalase II family. Zn(2+) is required as a cofactor. Palmitoylated on Cys-254 by ZDHHC20.

The protein localises to the endoplasmic reticulum membrane. Its subcellular location is the cell membrane. The catalysed reaction is hexadecanoyl-CoA + H2O = hexadecanoate + CoA + H(+). The enzyme catalyses dodecanoyl-CoA + H2O = dodecanoate + CoA + H(+). It catalyses the reaction tetradecanoyl-CoA + H2O = tetradecanoate + CoA + H(+). It carries out the reaction octadecanoyl-CoA + H2O = octadecanoate + CoA + H(+). The catalysed reaction is a beta-lactam + H2O = a substituted beta-amino acid. With respect to regulation, beta-lactamase activity is inhibited by sulbactam. In terms of biological role, acyl-CoA thioesterases are a group of enzymes that catalyze the hydrolysis of acyl-CoAs to the free fatty acid and coenzyme A (CoASH), providing the potential to regulate intracellular levels of acyl-CoAs, free fatty acids and CoASH. Has an acyl-CoA thioesterase activity towards the long chain fatty acyl-CoA thioester palmitoyl-CoA (hexadecanoyl-CoA; C16:0-CoA). Displays a substrate preference for fatty acyl-CoAs with chain-lengths C12-C18. Possesses beta-lactamase activity, catalyzing the hydrolysis of penicillin G and nitrocefin. Exhibits no activity towards other beta-lactam antibiotic classes including cephalosporins (cefotaxime) and carbapenems (imipenem). The sequence is that of Acyl-coenzyme A thioesterase MBLAC2 (MBLAC2) from Homo sapiens (Human).